A 95-amino-acid polypeptide reads, in one-letter code: Aspartyl/glutamyl-tRNA(Asn/Gln) amidotransferase subunit C (95 aa).

It belongs to the GatC family. In terms of assembly, heterotrimer of A, B and C subunits.

It catalyses the reaction L-glutamyl-tRNA(Gln) + L-glutamine + ATP + H2O = L-glutaminyl-tRNA(Gln) + L-glutamate + ADP + phosphate + H(+). It carries out the reaction L-aspartyl-tRNA(Asn) + L-glutamine + ATP + H2O = L-asparaginyl-tRNA(Asn) + L-glutamate + ADP + phosphate + 2 H(+). Allows the formation of correctly charged Asn-tRNA(Asn) or Gln-tRNA(Gln) through the transamidation of misacylated Asp-tRNA(Asn) or Glu-tRNA(Gln) in organisms which lack either or both of asparaginyl-tRNA or glutaminyl-tRNA synthetases. The reaction takes place in the presence of glutamine and ATP through an activated phospho-Asp-tRNA(Asn) or phospho-Glu-tRNA(Gln). The chain is Aspartyl/glutamyl-tRNA(Asn/Gln) amidotransferase subunit C from Chlorobium chlorochromatii (strain CaD3).